We begin with the raw amino-acid sequence, 201 residues long: Ubiquinone biosynthesis accessory factor UbiJ (201 aa).

An SCP2 domain is found at 15-112 (LNTFLYRSPA…QVVQNFVALA (98 aa)).

The protein belongs to the UbiJ family.

It is found in the cytoplasm. It participates in cofactor biosynthesis; ubiquinone biosynthesis. Its function is as follows. Required for ubiquinone (coenzyme Q) biosynthesis under aerobic conditions. Binds hydrophobic ubiquinone biosynthetic intermediates via its SCP2 domain and is essential for the stability of the Ubi complex. May constitute a docking platform where Ubi enzymes assemble and access their SCP2-bound polyprenyl substrates. Required for intracellular proliferation in macrophages. This Salmonella typhimurium (strain LT2 / SGSC1412 / ATCC 700720) protein is Ubiquinone biosynthesis accessory factor UbiJ.